Consider the following 697-residue polypeptide: Alpha-1,4-glucan:maltose-1-phosphate maltosyltransferase (697 aa).

Lysine 284 is an alpha-maltose 1-phosphate binding site. Residues 286–305 (RNNSVTAAPGDVGSPWAIGS) form a disordered region. 2 residues coordinate alpha-maltose 1-phosphate: glutamine 344 and aspartate 379. Catalysis depends on aspartate 414, which acts as the Nucleophile. Asparagine 415 is a binding site for alpha-maltose 1-phosphate. Glutamate 443 (proton donor) is an active-site residue. 553–554 (KY) is an alpha-maltose 1-phosphate binding site.

It belongs to the glycosyl hydrolase 13 family. GlgE subfamily. In terms of assembly, homodimer.

The catalysed reaction is alpha-maltose 1-phosphate + [(1-&gt;4)-alpha-D-glucosyl](n) = [(1-&gt;4)-alpha-D-glucosyl](n+2) + phosphate. It participates in glycan biosynthesis; glycogen biosynthesis. With respect to regulation, the transfer reaction from maltose-1-P to glycogen is inhibited by micromolar amounts of inorganic phosphate or arsenate but is only slightly inhibited by millimolar concentrations of glucose-1-P, glucose-6-P, or inorganic pyrophosphate. Is also inhibited by ATP, by 1,4-dideoxy-1,4-imino-D-arabinitol (DIA), but not by isofagomine. In terms of biological role, maltosyltransferase that uses maltose 1-phosphate (M1P) as the sugar donor to elongate linear or branched alpha-(1-&gt;4)-glucans. Is also able to catalyze the reverse reaction in vitro. Cannot use glucose 1-phosphate as substrate. Is involved in a branched alpha-glucan biosynthetic pathway from trehalose, together with TreS, Mak and GlgB. The polypeptide is Alpha-1,4-glucan:maltose-1-phosphate maltosyltransferase (glgE) (Mycolicibacterium smegmatis (strain ATCC 700084 / mc(2)155) (Mycobacterium smegmatis)).